The following is a 142-amino-acid chain: Transcription antitermination protein NusB (142 aa).

The protein belongs to the NusB family.

Involved in transcription antitermination. Required for transcription of ribosomal RNA (rRNA) genes. Binds specifically to the boxA antiterminator sequence of the ribosomal RNA (rrn) operons. The protein is Transcription antitermination protein NusB of Thermobifida fusca (strain YX).